The primary structure comprises 101 residues: Small ribosomal subunit protein uS14 (101 aa).

It belongs to the universal ribosomal protein uS14 family. As to quaternary structure, part of the 30S ribosomal subunit. Contacts proteins S3 and S10.

Its function is as follows. Binds 16S rRNA, required for the assembly of 30S particles and may also be responsible for determining the conformation of the 16S rRNA at the A site. This is Small ribosomal subunit protein uS14 from Burkholderia vietnamiensis (strain G4 / LMG 22486) (Burkholderia cepacia (strain R1808)).